Reading from the N-terminus, the 341-residue chain is Thromboxane A2 receptor (341 aa).

Topologically, residues 1–29 (MWPNGTSLGACFRPVNITLQERRAIASPW) are extracellular. Residues Asn-4 and Asn-16 are each glycosylated (N-linked (GlcNAc...) asparagine). Residues 30–52 (FAASFCALGLGSNLLALSVLAGA) form a helical membrane-spanning segment. The Cytoplasmic portion of the chain corresponds to 53-65 (RPGAGPRSSFLAL). The chain crosses the membrane as a helical span at residues 66–86 (LCGLVLTDFLGLLVTGAIVAS). Residues 87–105 (QHAALLDWRATDPSCRLCY) are Extracellular-facing. Cysteines 104 and 181 form a disulfide. The chain crosses the membrane as a helical span at residues 106–127 (FMGVAMVFFGLCPLLLGAAMAS). Over 128–147 (ERFVGITRPFSRPTATSRRA) the chain is Cytoplasmic. Residues 148–170 (WATVGLVWVAAGALGLLPLLGLG) form a helical membrane-spanning segment. The Extracellular portion of the chain corresponds to 171-191 (RYSVQYPGSWCFLTLGTQRGD). The chain crosses the membrane as a helical span at residues 192–217 (VVFGLIFALLGSASVGLSLLLNTVSV). At 218 to 244 (ATLCRVYHTREATQRPRDCEVEMMVQL) the chain is on the cytoplasmic side. Residues 245–268 (VGIMVVATVCWMPLLVFIMQTLLQ) form a helical membrane-spanning segment. Residues 269–287 (TPPVMSFSGQLLRATEHQL) are Extracellular-facing. Residues 288–309 (LIYLRVATWNQILDPWVYILFR) traverse the membrane as a helical segment. The Cytoplasmic segment spans residues 310-341 (RSVLRRLHPRFSSQLQAVSLRRPPAQAMLSGP). Ser-328 carries the post-translational modification Phosphoserine.

It belongs to the G-protein coupled receptor 1 family. As to quaternary structure, interacts with RPGRIP1L. Interacts with RACK1; the interaction regulates TBXA2R cell surface expression.

It localises to the cell membrane. Functionally, receptor for thromboxane A2 (TXA2), a potent stimulator of platelet aggregation. The activity of this receptor is mediated by a G-protein that activates a phosphatidylinositol-calcium second messenger system. In the kidney, the binding of TXA2 to glomerular TP receptors causes intense vasoconstriction. Activates phospholipase C and adenylyl cyclase. In Mus musculus (Mouse), this protein is Thromboxane A2 receptor (Tbxa2r).